The primary structure comprises 287 residues: Aquaporin PIP1-1 (287 aa).

2 helical membrane passes run 57-77 (IAEF…VMGV) and 92-114 (IAWS…SGHI). The NPA 1 motif lies at 115-117 (NPA). Transmembrane regions (helical) follow at residues 134–154 (VFYI…VKGF), 176–196 (GDGL…VFSA), and 210–230 (ILAP…TMGI). The NPA 2 motif lies at 236-238 (NPA). A helical transmembrane segment spans residues 258–278 (IFWVGPFIGAALAAIYHQVII).

Belongs to the MIP/aquaporin (TC 1.A.8) family. PIP (TC 1.A.8.11) subfamily. May interact with PIP1-2 to form heteromers. As to expression, highly expressed in roots, shoots and developing tassels, and at lower levels in leaves.

Its subcellular location is the cell membrane. Water channel required to facilitate the transport of water across cell membrane. Active as heteromers with PIP1-2, but not as homomers. In Zea mays (Maize), this protein is Aquaporin PIP1-1 (PIP1-1).